The following is a 534-amino-acid chain: 2,3-bisphosphoglycerate-independent phosphoglycerate mutase (534 aa).

Mn(2+) is bound by residues Asp-15 and Ser-65. Ser-65 (phosphoserine intermediate) is an active-site residue. Residues His-126, 156–157 (RD), Arg-188, Arg-194, 260–263 (RPDR), and Lys-333 each bind substrate. Residues Asp-400, His-404, Asp-441, His-442, and His-459 each contribute to the Mn(2+) site.

The protein belongs to the BPG-independent phosphoglycerate mutase family. In terms of assembly, monomer. Mn(2+) is required as a cofactor.

It carries out the reaction (2R)-2-phosphoglycerate = (2R)-3-phosphoglycerate. It functions in the pathway carbohydrate degradation; glycolysis; pyruvate from D-glyceraldehyde 3-phosphate: step 3/5. Functionally, catalyzes the interconversion of 2-phosphoglycerate and 3-phosphoglycerate. This chain is 2,3-bisphosphoglycerate-independent phosphoglycerate mutase, found in Acaryochloris marina (strain MBIC 11017).